The chain runs to 156 residues: Endoribonuclease YbeY (156 aa).

3 residues coordinate Zn(2+): His117, His121, and His127.

This sequence belongs to the endoribonuclease YbeY family. Zn(2+) serves as cofactor.

It localises to the cytoplasm. Its function is as follows. Single strand-specific metallo-endoribonuclease involved in late-stage 70S ribosome quality control and in maturation of the 3' terminus of the 16S rRNA. This Shewanella halifaxensis (strain HAW-EB4) protein is Endoribonuclease YbeY.